A 100-amino-acid chain; its full sequence is MNQQKLTHYDILIKPITTEKTMLDREKRKYVFEVNVLSNKALVKNAVESLFNVKVEKVNISLVKPKPKRRGRFEGKTRRWKKAVVTLKEGYTIKELEGQQ.

It belongs to the universal ribosomal protein uL23 family. As to quaternary structure, part of the 50S ribosomal subunit. Contacts protein L29, and trigger factor when it is bound to the ribosome.

Its function is as follows. One of the early assembly proteins it binds 23S rRNA. One of the proteins that surrounds the polypeptide exit tunnel on the outside of the ribosome. Forms the main docking site for trigger factor binding to the ribosome. The chain is Large ribosomal subunit protein uL23 from Pseudothermotoga lettingae (strain ATCC BAA-301 / DSM 14385 / NBRC 107922 / TMO) (Thermotoga lettingae).